A 253-amino-acid polypeptide reads, in one-letter code: U1 small nuclear ribonucleoprotein A (253 aa).

The RRM 1 domain occupies 23 to 102 (VTIYINNLNE…KPMRIQYAKT (80 aa)). The tract at residues 111 to 140 (DGTFVPRERRKRNDEKPEKKQKREQHHDVS) is disordered. One can recognise an RRM 2 domain in the interval 179–253 (NILFVQNLPH…NQMLISYAKK (75 aa)).

It belongs to the RRM U1 A/B'' family. Component of the spliceosome where it is associated with snRNP U1.

The protein localises to the nucleus. It localises to the nucleolus. Functionally, involved in nuclear pre-mRNA splicing. The chain is U1 small nuclear ribonucleoprotein A from Oryza sativa subsp. indica (Rice).